Reading from the N-terminus, the 638-residue chain is ATP-dependent zinc metalloprotease FtsH (638 aa).

Residues 1–11 (MSQKGKNKKWR) are Cytoplasmic-facing. Residues 12–32 (SAGLYALLAIVLISLATTFLG) traverse the membrane as a helical segment. Residues 33 to 114 (NRPPERLEIS…LAVRPVQEEG (82 aa)) are Lumenal-facing. A helical membrane pass occupies residues 115–135 (LLGRILSTFFLPVLLLLGLFF). At 136–638 (LLRRAQNGPG…TLPMAVNAGA (503 aa)) the chain is on the cytoplasmic side. 209-216 (GPPGTGKT) serves as a coordination point for ATP. H431 contributes to the Zn(2+) binding site. Residue E432 is part of the active site. Positions 435 and 510 each coordinate Zn(2+).

The protein in the central section; belongs to the AAA ATPase family. It in the C-terminal section; belongs to the peptidase M41 family. As to quaternary structure, homohexamer. Zn(2+) is required as a cofactor.

It localises to the cellular thylakoid membrane. In terms of biological role, acts as a processive, ATP-dependent zinc metallopeptidase for both cytoplasmic and membrane proteins. Plays a role in the quality control of integral membrane proteins. This is ATP-dependent zinc metalloprotease FtsH from Synechococcus sp. (strain JA-2-3B'a(2-13)) (Cyanobacteria bacterium Yellowstone B-Prime).